The sequence spans 179 residues: Peptidyl-tRNA hydrolase (179 aa).

Residue tyrosine 14 participates in tRNA binding. The active-site Proton acceptor is histidine 19. 3 residues coordinate tRNA: tyrosine 60, asparagine 62, and asparagine 108.

Belongs to the PTH family. In terms of assembly, monomer.

Its subcellular location is the cytoplasm. It carries out the reaction an N-acyl-L-alpha-aminoacyl-tRNA + H2O = an N-acyl-L-amino acid + a tRNA + H(+). Hydrolyzes ribosome-free peptidyl-tRNAs (with 1 or more amino acids incorporated), which drop off the ribosome during protein synthesis, or as a result of ribosome stalling. In terms of biological role, catalyzes the release of premature peptidyl moieties from peptidyl-tRNA molecules trapped in stalled 50S ribosomal subunits, and thus maintains levels of free tRNAs and 50S ribosomes. In Mycoplasma mobile (strain ATCC 43663 / 163K / NCTC 11711) (Mesomycoplasma mobile), this protein is Peptidyl-tRNA hydrolase.